The chain runs to 70 residues: DNA-directed RNA polymerase subunit omega (70 aa).

Belongs to the RNA polymerase subunit omega family. In terms of assembly, the RNAP catalytic core consists of 2 alpha, 1 beta, 1 beta' and 1 omega subunit. When a sigma factor is associated with the core the holoenzyme is formed, which can initiate transcription.

The catalysed reaction is RNA(n) + a ribonucleoside 5'-triphosphate = RNA(n+1) + diphosphate. Functionally, promotes RNA polymerase assembly. Latches the N- and C-terminal regions of the beta' subunit thereby facilitating its interaction with the beta and alpha subunits. This is DNA-directed RNA polymerase subunit omega from Shouchella clausii (strain KSM-K16) (Alkalihalobacillus clausii).